We begin with the raw amino-acid sequence, 198 residues long: Recombination protein RecR (198 aa).

The segment at 59–74 (CSLCCNYTDHDPCPIC) adopts a C4-type zinc-finger fold. The region spanning 82 to 175 (TLLCIVEQPR…KVTRIAHGLP (94 aa)) is the Toprim domain.

This sequence belongs to the RecR family.

May play a role in DNA repair. It seems to be involved in an RecBC-independent recombinational process of DNA repair. It may act with RecF and RecO. The polypeptide is Recombination protein RecR (Desulfitobacterium hafniense (strain Y51)).